We begin with the raw amino-acid sequence, 264 residues long: Anamorsin homolog 2 (264 aa).

The segment at Met-1 to Phe-142 is N-terminal SAM-like domain. The segment at Pro-143–Leu-174 is linker. Positions 185, 194, 197, and 199 each coordinate [2Fe-2S] cluster. The interval Cys-185–Cys-199 is fe-S binding site A. 4 residues coordinate [4Fe-4S] cluster: Cys-225, Cys-228, Cys-236, and Cys-239. Short sequence motifs (cx2C motif) lie at residues Cys-225–Cys-228 and Cys-236–Cys-239. The segment at Cys-225–Cys-239 is fe-S binding site B.

The protein belongs to the anamorsin family. Monomer. The cofactor is [2Fe-2S] cluster. [4Fe-4S] cluster is required as a cofactor.

It is found in the cytoplasm. The protein resides in the mitochondrion intermembrane space. Its function is as follows. Component of the cytosolic iron-sulfur (Fe-S) protein assembly (CIA) machinery. Required for the maturation of extramitochondrial Fe-S proteins. Part of an electron transfer chain functioning in an early step of cytosolic Fe-S biogenesis, facilitating the de novo assembly of a [4Fe-4S] cluster on the cytosolic Fe-S scaffold complex. Electrons are transferred from NADPH via a FAD- and FMN-containing diflavin oxidoreductase. Together with the diflavin oxidoreductase, also required for the assembly of the diferric tyrosyl radical cofactor of ribonucleotide reductase (RNR), probably by providing electrons for reduction during radical cofactor maturation in the catalytic small subunit. This is Anamorsin homolog 2 from Oryza sativa subsp. japonica (Rice).